The chain runs to 400 residues: Elongation factor Tu (400 aa).

Residues Lys10–Gln208 form the tr-type G domain. The tract at residues Gly19–Ser26 is G1. Residue Gly19 to Ser26 coordinates GTP. Ser26 contributes to the Mg(2+) binding site. Positions Gly60–Asn64 are G2. A G3 region spans residues Asp81 to Gly84. Residues Asp81 to His85 and Asn136 to Asp139 contribute to the GTP site. The G4 stretch occupies residues Asn136–Asp139. Residues Ser174–Leu176 are G5.

Belongs to the TRAFAC class translation factor GTPase superfamily. Classic translation factor GTPase family. EF-Tu/EF-1A subfamily. In terms of assembly, monomer.

Its subcellular location is the cytoplasm. It catalyses the reaction GTP + H2O = GDP + phosphate + H(+). Its function is as follows. GTP hydrolase that promotes the GTP-dependent binding of aminoacyl-tRNA to the A-site of ribosomes during protein biosynthesis. In Thermotoga neapolitana (strain ATCC 49049 / DSM 4359 / NBRC 107923 / NS-E), this protein is Elongation factor Tu.